The primary structure comprises 482 residues: ATP synthase subunit beta, chloroplastic (482 aa).

162 to 169 (GGAGVGKT) provides a ligand contact to ATP.

The protein belongs to the ATPase alpha/beta chains family. In terms of assembly, F-type ATPases have 2 components, CF(1) - the catalytic core - and CF(0) - the membrane proton channel. CF(1) has five subunits: alpha(3), beta(3), gamma(1), delta(1), epsilon(1). CF(0) has four main subunits: a(1), b(1), b'(1) and c(9-12).

The protein resides in the plastid. It localises to the chloroplast thylakoid membrane. It carries out the reaction ATP + H2O + 4 H(+)(in) = ADP + phosphate + 5 H(+)(out). In terms of biological role, produces ATP from ADP in the presence of a proton gradient across the membrane. The catalytic sites are hosted primarily by the beta subunits. This Pleurastrum terricola (Filamentous green alga) protein is ATP synthase subunit beta, chloroplastic.